Reading from the N-terminus, the 146-residue chain is uncharacterized protein (146 aa).

The region spanning 7–146 (LQINYKTDEL…EGHDILIWNP (140 aa)) is the N-acetyltransferase domain.

This is an uncharacterized protein from Staphylococcus epidermidis (strain ATCC 12228 / FDA PCI 1200).